The chain runs to 897 residues: MDSQRSHHILTRLTKIRRRPQQPLTDFTELYSRIANETIYYLNLEEKKRYKEALQGWKALTTDVLFKQTLIEHNYPNTQSYTKDEVSLQNGIRELYHKSVMHLKRVKKLVREEPAPRNDMPSSKTYTNHSSSFTRSTEPPPVFQMVPGRMMKTLRNRNACGYKTAYSNPSLSSYGNSTSIKRGEDAENIRVNFVPSKPLSNNASRQHKNPIEHNDPPLKKETELYSDKYISEPILIDLTNDEDDHDVGILKGHNVFDEEESDGFEFDVSDYYDNFSEVDVEEEEEEKEERRRIKTLEAIQQQMSDLSVTSSTSSNKSVSSSENVPGSCIQSLPTTAPALPSLPPPPLLNVDRASSTGALKPHSLETSTTMDSSKIRNPQISKLMKNNHVPYLKGTKSTPTLITKSTPTFITRSKSNTKPIIKSNASSPTSSLTVPNSVIQKPKTAAMAAKRVLNSKKVASNPALNTTKKSHPILKSKTAKVPNSSSKKTSSHPSRPVSNSKPYSHGASQNKKPSKNQTTSMSKTNRKIPAQKKIGSPKIEDVGTEDATEHATSLNEQREEPEIDKKVLREILEDEIIDSLQGVDRQAAKQIFAEIVVHGDEVHWDDIAGLESAKYSLKEAVVYPFLRPDLFRGLREPVRGMLLFGPPGTGKTMLARAVATESHSTFFSISASSLTSKYLGESEKLVRALFAIAKKLSPSIIFVDEIDSIMGSRNNENENESSRRIKNEFLVQWSSLSSAAAGSNKSNTNNSDTNGDEDDTRVLVLAATNLPWSIDEAARRRFVRRQYIPLPEDQTRHVQFKKLLSHQKHTLTESDFDELVKITEGYSGSDITSLAKDAAMGPLRDLGDKLLETEREMIRPIGLVDFKNSLVYIKPSVSQDGLVKYEKWASQFGSSGS.

5 disordered regions span residues E112–Q144, P195–K219, Q302–T398, S413–V438, and K456–P561. A compositionally biased stretch (polar residues) spans M120–T137. Over residues N209–K219 the composition is skewed to basic and acidic residues. The span at S307–S321 shows a compositional bias: low complexity. Polar residues predominate over residues L364–I380. Over residues K468–T478 the composition is skewed to basic residues. Low complexity predominate over residues K480 to P496. Polar residues predominate over residues V497 to K523. Phosphoserine is present on S536. G645 to T652 contacts ATP.

The protein belongs to the AAA ATPase family. As to quaternary structure, interacts with SPT2/SIN1.

The sequence is that of Protein SAP1 (SAP1) from Saccharomyces cerevisiae (strain ATCC 204508 / S288c) (Baker's yeast).